A 329-amino-acid polypeptide reads, in one-letter code: MGSLNSIAVLGGGAWGTALAQTAARAGRKVTLWEHDAGNAEHLIAARESRFLPGVRLEPSIQVTRDLAEAARADALLLVVPAQVLRQVVTSLQPLIAPRTPLVACAKGIEHGTHRFMTEIIAEAAPAAIPAILSGPSFAADVARGLPTAVTIAATDAACAQALAQAMNSGSFRPYHSTDVRGVELGGATKNVLAIAAGIVEGRQLGASALAAMTTRGFVELVRFGKAYGARIETMHGLSGLGDLTMCCSTPQSRNFSFGMALGRGEGIESAAHGKLAEGYYTAPVLLEMAQAKGIDMPISTAVAAVLGGKLSVDAAIEGLLTRPLKAEE.

Residues Trp-15, His-35, and Lys-107 each coordinate NADPH. Sn-glycerol 3-phosphate contacts are provided by Lys-107, Gly-135, and Ser-137. NADPH is bound at residue Ala-139. Residues Lys-190, Asp-243, Ser-253, Arg-254, and Asn-255 each coordinate sn-glycerol 3-phosphate. The Proton acceptor role is filled by Lys-190. Arg-254 is an NADPH binding site. Residues Leu-276 and Glu-278 each contribute to the NADPH site.

The protein belongs to the NAD-dependent glycerol-3-phosphate dehydrogenase family.

It localises to the cytoplasm. The catalysed reaction is sn-glycerol 3-phosphate + NAD(+) = dihydroxyacetone phosphate + NADH + H(+). The enzyme catalyses sn-glycerol 3-phosphate + NADP(+) = dihydroxyacetone phosphate + NADPH + H(+). Its pathway is membrane lipid metabolism; glycerophospholipid metabolism. Catalyzes the reduction of the glycolytic intermediate dihydroxyacetone phosphate (DHAP) to sn-glycerol 3-phosphate (G3P), the key precursor for phospholipid synthesis. This Rhodopseudomonas palustris (strain TIE-1) protein is Glycerol-3-phosphate dehydrogenase [NAD(P)+].